The sequence spans 133 residues: Ribosome-binding factor A (133 aa).

Belongs to the RbfA family. As to quaternary structure, monomer. Binds 30S ribosomal subunits, but not 50S ribosomal subunits or 70S ribosomes.

It is found in the cytoplasm. Its function is as follows. One of several proteins that assist in the late maturation steps of the functional core of the 30S ribosomal subunit. Associates with free 30S ribosomal subunits (but not with 30S subunits that are part of 70S ribosomes or polysomes). Required for efficient processing of 16S rRNA. May interact with the 5'-terminal helix region of 16S rRNA. In Pseudomonas fluorescens (strain ATCC BAA-477 / NRRL B-23932 / Pf-5), this protein is Ribosome-binding factor A.